Consider the following 274-residue polypeptide: NADH-ubiquinone oxidoreductase chain 2 (274 aa).

8 helical membrane passes run 28 to 48, 54 to 74, 79 to 99, 107 to 127, 128 to 148, 171 to 191, 206 to 226, and 254 to 274; these read MIIMSALLLKSGAAPFHFWFP, LTWMNALMLMTWQKIAPLMLI, IKYLLLISVILSVIIGAIGGL, LMAFSSINHLGWMLSSLMFSE, SIWLIYFFFYSFLSFVLTFMF, FTLFMNFLSLGGLPPFLGFLP, FLLTLMMMSTLITLFFYLRIC, and LIMTFFSIFGLFMISLFYFMF.

The protein belongs to the complex I subunit 2 family.

Its subcellular location is the mitochondrion inner membrane. It catalyses the reaction a ubiquinone + NADH + 5 H(+)(in) = a ubiquinol + NAD(+) + 4 H(+)(out). In terms of biological role, core subunit of the mitochondrial membrane respiratory chain NADH dehydrogenase (Complex I) that is believed to belong to the minimal assembly required for catalysis. Complex I functions in the transfer of electrons from NADH to the respiratory chain. The immediate electron acceptor for the enzyme is believed to be ubiquinone. The polypeptide is NADH-ubiquinone oxidoreductase chain 2 (mt:ND2) (Drosophila sechellia (Fruit fly)).